The primary structure comprises 71 residues: MKLLVLLVTLLVLSWTSAEDLGDQEILENNEDNNHESELGEPAAQHTDDETSQLGQALIPRCRKMPGVKMC.

The N-terminal stretch at 1 to 18 is a signal peptide; that stretch reads MKLLVLLVTLLVLSWTSA. A propeptide spanning residues 19 to 45 is cleaved from the precursor; it reads EDLGDQEILENNEDNNHESELGEPAAQ. Over residues 22–31 the composition is skewed to acidic residues; that stretch reads GDQEILENNE. The interval 22–54 is disordered; it reads GDQEILENNEDNNHESELGEPAAQHTDDETSQL. The cysteines at positions 62 and 71 are disulfide-linked.

It belongs to the natterin family. Expressed by the venom gland.

The protein resides in the secreted. With respect to regulation, inhibited by tissue-kallikrein inhibitor TKI and trasylol. Plasma kallikrein inhibitor PKSI527 and classical inhibitors of serine-, metallo-, thiol- or aspartate-peptidases evokes a minor inhibition of the peptide digestion. Shows nociceptive, edema-inducing and kininogenase activity with release of kallidin from low molecular weight kininogen. The cleavage occurs at Met-Lys bonds. This Thalassophryne nattereri (Copper Joe toadfish) protein is Natterin-P.